The sequence spans 373 residues: tRNA-specific 2-thiouridylase MnmA (373 aa).

ATP is bound by residues Gly12–Ser19 and Met38. Residues Asn98 to Asp100 are interaction with target base in tRNA. Residue Cys103 is the Nucleophile of the active site. Cysteines 103 and 200 form a disulfide. Gly127 lines the ATP pocket. An interaction with tRNA region spans residues Lys150 to Gln152. The active-site Cysteine persulfide intermediate is Cys200. Residues Arg312–Tyr313 are interaction with tRNA.

Belongs to the MnmA/TRMU family.

Its subcellular location is the cytoplasm. The enzyme catalyses S-sulfanyl-L-cysteinyl-[protein] + uridine(34) in tRNA + AH2 + ATP = 2-thiouridine(34) in tRNA + L-cysteinyl-[protein] + A + AMP + diphosphate + H(+). Functionally, catalyzes the 2-thiolation of uridine at the wobble position (U34) of tRNA, leading to the formation of s(2)U34. This Streptococcus pyogenes serotype M3 (strain SSI-1) protein is tRNA-specific 2-thiouridylase MnmA.